A 345-amino-acid polypeptide reads, in one-letter code: Uroporphyrinogen decarboxylase (345 aa).

Substrate is bound by residues 28–32 (RQAGR), Asp77, Tyr153, Ser208, and His322.

The protein belongs to the uroporphyrinogen decarboxylase family. As to quaternary structure, homodimer.

It localises to the cytoplasm. It catalyses the reaction uroporphyrinogen III + 4 H(+) = coproporphyrinogen III + 4 CO2. It functions in the pathway porphyrin-containing compound metabolism; protoporphyrin-IX biosynthesis; coproporphyrinogen-III from 5-aminolevulinate: step 4/4. Catalyzes the decarboxylation of four acetate groups of uroporphyrinogen-III to yield coproporphyrinogen-III. In Solibacter usitatus (strain Ellin6076), this protein is Uroporphyrinogen decarboxylase.